We begin with the raw amino-acid sequence, 379 residues long: Bifunctional enzyme IspD/IspF (379 aa).

Positions Met1–Val223 are 2-C-methyl-D-erythritol 4-phosphate cytidylyltransferase. The interval Arg224–Ala379 is 2-C-methyl-D-erythritol 2,4-cyclodiphosphate synthase. 2 residues coordinate a divalent metal cation: Asp230 and His232. Residues Asp230 to His232 and His256 to Ser257 contribute to the 4-CDP-2-C-methyl-D-erythritol 2-phosphate site. His264 is an a divalent metal cation binding site. 4-CDP-2-C-methyl-D-erythritol 2-phosphate contacts are provided by residues Asp278 to Gly280, Thr354 to Glu357, Phe361, and Arg364.

It in the N-terminal section; belongs to the IspD/TarI cytidylyltransferase family. IspD subfamily. The protein in the C-terminal section; belongs to the IspF family. A divalent metal cation is required as a cofactor.

The enzyme catalyses 2-C-methyl-D-erythritol 4-phosphate + CTP + H(+) = 4-CDP-2-C-methyl-D-erythritol + diphosphate. The catalysed reaction is 4-CDP-2-C-methyl-D-erythritol 2-phosphate = 2-C-methyl-D-erythritol 2,4-cyclic diphosphate + CMP. It functions in the pathway isoprenoid biosynthesis; isopentenyl diphosphate biosynthesis via DXP pathway; isopentenyl diphosphate from 1-deoxy-D-xylulose 5-phosphate: step 2/6. Its pathway is isoprenoid biosynthesis; isopentenyl diphosphate biosynthesis via DXP pathway; isopentenyl diphosphate from 1-deoxy-D-xylulose 5-phosphate: step 4/6. In terms of biological role, bifunctional enzyme that catalyzes the formation of 4-diphosphocytidyl-2-C-methyl-D-erythritol from CTP and 2-C-methyl-D-erythritol 4-phosphate (MEP) (IspD), and catalyzes the conversion of 4-diphosphocytidyl-2-C-methyl-D-erythritol 2-phosphate (CDP-ME2P) to 2-C-methyl-D-erythritol 2,4-cyclodiphosphate (ME-CPP) with a corresponding release of cytidine 5-monophosphate (CMP) (IspF). The protein is Bifunctional enzyme IspD/IspF of Rhodobacter capsulatus (strain ATCC BAA-309 / NBRC 16581 / SB1003).